A 187-amino-acid polypeptide reads, in one-letter code: Ribosome-recycling factor (187 aa).

This sequence belongs to the RRF family.

The protein resides in the cytoplasm. Responsible for the release of ribosomes from messenger RNA at the termination of protein biosynthesis. May increase the efficiency of translation by recycling ribosomes from one round of translation to another. This is Ribosome-recycling factor from Paracoccus zeaxanthinifaciens.